Consider the following 96-residue polypeptide: Plasminogen-like protein B (96 aa).

The first 19 residues, 1–19 (MEHKEVVLLLLLFLKSGQG), serve as a signal peptide directing secretion. The region spanning 20-96 (EPLDDYVNTQ…RMRDAVLFEK (77 aa)) is the PAN domain. Intrachain disulfides connect cysteine 49/cysteine 73 and cysteine 53/cysteine 61.

The protein resides in the secreted. May bind noncovalently to lysine binding sites present in the kringle structures of plasminogen. This may interfere with the binding of fibrin or alpha-2-antiplasmin to plasminogen and may result in the localization of activity at sites necessary for extracellular matrix destruction. The chain is Plasminogen-like protein B (PLGLB1) from Homo sapiens (Human).